The sequence spans 334 residues: GTPase Obg (334 aa).

Residues methionine 1–methionine 159 enclose the Obg domain. The region spanning alanine 160–leucine 332 is the OBG-type G domain. GTP is bound by residues glycine 166–serine 173, phenylalanine 191–histidine 195, aspartate 212–glycine 215, asparagine 282–aspartate 285, and serine 313–leucine 315. Residues serine 173 and threonine 193 each coordinate Mg(2+).

Belongs to the TRAFAC class OBG-HflX-like GTPase superfamily. OBG GTPase family. Monomer. The cofactor is Mg(2+).

It localises to the cytoplasm. Functionally, an essential GTPase which binds GTP, GDP and possibly (p)ppGpp with moderate affinity, with high nucleotide exchange rates and a fairly low GTP hydrolysis rate. Plays a role in control of the cell cycle, stress response, ribosome biogenesis and in those bacteria that undergo differentiation, in morphogenesis control. The sequence is that of GTPase Obg from Vesicomyosocius okutanii subsp. Calyptogena okutanii (strain HA).